The chain runs to 483 residues: Aspartyl/glutamyl-tRNA(Asn/Gln) amidotransferase subunit B (483 aa).

It belongs to the GatB/GatE family. GatB subfamily. Heterotrimer of A, B and C subunits.

It catalyses the reaction L-glutamyl-tRNA(Gln) + L-glutamine + ATP + H2O = L-glutaminyl-tRNA(Gln) + L-glutamate + ADP + phosphate + H(+). The catalysed reaction is L-aspartyl-tRNA(Asn) + L-glutamine + ATP + H2O = L-asparaginyl-tRNA(Asn) + L-glutamate + ADP + phosphate + 2 H(+). In terms of biological role, allows the formation of correctly charged Asn-tRNA(Asn) or Gln-tRNA(Gln) through the transamidation of misacylated Asp-tRNA(Asn) or Glu-tRNA(Gln) in organisms which lack either or both of asparaginyl-tRNA or glutaminyl-tRNA synthetases. The reaction takes place in the presence of glutamine and ATP through an activated phospho-Asp-tRNA(Asn) or phospho-Glu-tRNA(Gln). The polypeptide is Aspartyl/glutamyl-tRNA(Asn/Gln) amidotransferase subunit B (Rickettsia typhi (strain ATCC VR-144 / Wilmington)).